The chain runs to 468 residues: MAEIWFLVVPILILCLLLVRVIVSKKKKNSRGKLPPGSMGWPYLGETLQLYSQNPNVFFTSKQKRYGEIFKTRILGYPCVMLASPEAARFVLVTHAHMFKPTYPRSKEKLIGPSALFFHQGDYHSHIRKLVQSSFYPETIRKLIPDIEHIALSSLQSWANMPIVSTYQEMKKFAFDVGILAIFGHLESSYKEILKHNYNIVDKGYNSFPMSLPGTSYHKALMARKQLKTIVSEIICERREKRALQTDFLGHLLNFKNEKGRVLTQEQIADNIIGVLFAAQDTTASCLTWILKYLHDDQKLLEAVKAEQKAIYEENSREKKPLTWRQTRNMPLTHKVIVESLRMASIISFTFREAVVDVEYKGYLIPKGWKVMPLFRNIHHNPKYFSNPEVFDPSRFEVNPKPNTFMPFGSGVHACPGNELAKLQILIFLHHLVSNFRWEVKGGEKGIQYSPFPIPQNGLPATFRRHSL.

A helical transmembrane segment spans residues 4–24 (IWFLVVPILILCLLLVRVIVS). Cys415 is a heme binding site.

The protein belongs to the cytochrome P450 family. It depends on heme as a cofactor. As to expression, mainly expressed in flowers. Lower expression in siliques, rosette leaves, roots and stems. Not expressed in dry seeds. Expressed in silique envelopes, but not in embryo or endosperm during the seed development.

It is found in the membrane. The catalysed reaction is 2-cis-(+)-abscisate + reduced [NADPH--hemoprotein reductase] + O2 = (+)-8'-hydroxyabscisate + oxidized [NADPH--hemoprotein reductase] + H2O + H(+). It participates in plant hormone degradation; abscisic acid degradation. In terms of biological role, involved in the oxidative degradation of abscisic acid, but not in the isomerization of the produced 8'-hydroxyabscisic acid (8'-OH-ABA) to (-)-phaseic acid (PA). The chain is Abscisic acid 8'-hydroxylase 4 (CYP707A4) from Arabidopsis thaliana (Mouse-ear cress).